The primary structure comprises 982 residues: Chromosome partition protein Smc (982 aa).

An ATP-binding site is contributed by 33-40 (PNGSGKSN). Coiled coils occupy residues 171–231 (RYTK…ELAV), 280–310 (SADM…VIID), and 337–377 (QTQL…QIEK). The SMC hinge domain maps to 416 to 535 (TGILNTLGTF…AKDLNSAINL (120 aa)). Coiled coils occupy residues 575 to 718 (SASL…SARE) and 753 to 822 (VKLS…IASN).

This sequence belongs to the SMC family. In terms of assembly, homodimer.

It localises to the cytoplasm. In terms of biological role, required for chromosome condensation and partitioning. This is Chromosome partition protein Smc from Mycoplasma genitalium (strain ATCC 33530 / DSM 19775 / NCTC 10195 / G37) (Mycoplasmoides genitalium).